The sequence spans 544 residues: 4-coumarate:CoA ligase 1 (544 aa).

This sequence belongs to the ATP-dependent AMP-binding enzyme family. In terms of assembly, monomer. In terms of tissue distribution, mostly expressed in flower organs, with highest levels in corollas, and, to a lesser extent, in tubes, sepals, pistils, stamen and ovaries. Also present at low levels in leaves.

It localises to the cytoplasm. The protein resides in the cytosol. The enzyme catalyses (E)-4-coumarate + ATP + CoA = (E)-4-coumaroyl-CoA + AMP + diphosphate. It carries out the reaction (E)-caffeate + ATP + CoA = (E)-caffeoyl-CoA + AMP + diphosphate. The catalysed reaction is benzoate + ATP + CoA = benzoyl-CoA + AMP + diphosphate. It catalyses the reaction (E)-cinnamate + ATP + CoA = (E)-cinnamoyl-CoA + AMP + diphosphate. The enzyme catalyses (E)-ferulate + ATP + CoA = (E)-feruloyl-CoA + AMP + diphosphate. Its pathway is phenylpropanoid metabolism; trans-cinnamate biosynthesis. It participates in phytoalexin biosynthesis; 3,4',5-trihydroxystilbene biosynthesis; 3,4',5-trihydroxystilbene from trans-4-coumarate: step 1/2. Functionally, catalyzes the formation of CoA esters of trans-cinnamic acid, 4-coumaric acid, ferulic acid, benzoic acid and caffeic acid. The sequence is that of 4-coumarate:CoA ligase 1 from Petunia hybrida (Petunia).